We begin with the raw amino-acid sequence, 611 residues long: Alkyldihydroxyacetonephosphate synthase (611 aa).

The region spanning 137 to 317 (VKNAPDLIVL…TEAVMKVHAV (181 aa)) is the FAD-binding PCMH-type domain. Residues 169-175 (PMGGGSN), 237-243 (DSFEFST), 250-255 (TCSSGH), and 301-307 (EGTLGII) each bind FAD. Arg-447 contributes to the substrate binding site. Catalysis depends on Tyr-508, which acts as the Proton donor/acceptor. An important for enzyme activity region spans residues 544–546 (HHH). The Microbody targeting signal signature appears at 609-611 (PKL).

Belongs to the FAD-binding oxidoreductase/transferase type 4 family. As to quaternary structure, homodimer. It depends on FAD as a cofactor.

Its subcellular location is the peroxisome. The catalysed reaction is a long chain fatty alcohol + a 1-acylglycerone 3-phosphate = a 1-O-alkylglycerone 3-phosphate + a long-chain fatty acid + H(+). It functions in the pathway glycerolipid metabolism; ether lipid biosynthesis. In terms of biological role, catalyzes the exchange of an acyl for a long-chain alkyl group and the formation of the ether bond in the biosynthesis of ether phospholipids. The protein is Alkyldihydroxyacetonephosphate synthase (eapA) of Dictyostelium discoideum (Social amoeba).